A 417-amino-acid chain; its full sequence is CinA-like protein (417 aa).

The protein belongs to the CinA family.

In Synechococcus sp. (strain RCC307), this protein is CinA-like protein.